The following is a 497-amino-acid chain: ATP synthase subunit alpha 2 (497 aa).

167-174 (GERATGKT) is an ATP binding site.

This sequence belongs to the ATPase alpha/beta chains family. F-type ATPases have 2 components, CF(1) - the catalytic core - and CF(0) - the membrane proton channel. CF(1) has five subunits: alpha(3), beta(3), gamma(1), delta(1), epsilon(1). CF(0) has four main subunits: a(1), b(1), b'(1) and c(9-12).

It localises to the cell inner membrane. It carries out the reaction ATP + H2O + 4 H(+)(in) = ADP + phosphate + 5 H(+)(out). Its function is as follows. Produces ATP from ADP in the presence of a proton gradient across the membrane. The alpha chain is a regulatory subunit. In Cereibacter sphaeroides (strain ATCC 17029 / ATH 2.4.9) (Rhodobacter sphaeroides), this protein is ATP synthase subunit alpha 2.